The primary structure comprises 253 residues: Glucosamine-6-phosphate deaminase (253 aa).

The active-site Proton acceptor; for enolization step is the aspartate 65. Asparagine 133 serves as the catalytic For ring-opening step. Residue histidine 135 is the Proton acceptor; for ring-opening step of the active site. Glutamate 140 serves as the catalytic For ring-opening step.

It belongs to the glucosamine/galactosamine-6-phosphate isomerase family. NagB subfamily.

The enzyme catalyses alpha-D-glucosamine 6-phosphate + H2O = beta-D-fructose 6-phosphate + NH4(+). The protein operates within amino-sugar metabolism; N-acetylneuraminate degradation; D-fructose 6-phosphate from N-acetylneuraminate: step 5/5. In terms of biological role, catalyzes the reversible isomerization-deamination of glucosamine 6-phosphate (GlcN6P) to form fructose 6-phosphate (Fru6P) and ammonium ion. The protein is Glucosamine-6-phosphate deaminase of Corynebacterium glutamicum (strain R).